A 502-amino-acid polypeptide reads, in one-letter code: C2H2-type transcription factor MSN2 (502 aa).

2 consecutive C2H2-type zinc fingers follow at residues 385 to 408 and 414 to 436; these read FVCH…RSLH and FACG…SRIH.

It is found in the nucleus. Key downstream transcription factor in the HOG1-MAPK pathway. Plays crucial roles in the regulation of growth, conidiation, trap development and fatty acid metabolism. Negatively regulates secondary metabolism such as arthrobotrisins biosynthesis.Also regulates autophagy and endocytosis. This Arthrobotrys oligospora (strain ATCC 24927 / CBS 115.81 / DSM 1491) (Nematode-trapping fungus) protein is C2H2-type transcription factor MSN2.